A 267-amino-acid chain; its full sequence is Trehalose-phosphate phosphatase (267 aa).

Aspartate 20 acts as the Nucleophile in catalysis. Residues aspartate 20, aspartate 22, and aspartate 198 each coordinate Mg(2+). A substrate-binding site is contributed by 20–22 (DLD).

This sequence belongs to the trehalose phosphatase family. It depends on Mg(2+) as a cofactor.

The catalysed reaction is alpha,alpha-trehalose 6-phosphate + H2O = alpha,alpha-trehalose + phosphate. Its pathway is glycan biosynthesis; trehalose biosynthesis. Functionally, removes the phosphate from trehalose 6-phosphate to produce free trehalose. This Salmonella typhimurium (strain SL1344) protein is Trehalose-phosphate phosphatase (otsB).